The primary structure comprises 333 residues: Fructose-1,6-bisphosphatase class 1 (333 aa).

4 residues coordinate Mg(2+): Glu92, Asp113, Leu115, and Asp116. Substrate contacts are provided by residues 116-119 (DGSS), Asn209, Tyr242, and Lys272. Glu278 is a Mg(2+) binding site.

This sequence belongs to the FBPase class 1 family. Homotetramer. It depends on Mg(2+) as a cofactor.

It localises to the cytoplasm. It carries out the reaction beta-D-fructose 1,6-bisphosphate + H2O = beta-D-fructose 6-phosphate + phosphate. It functions in the pathway carbohydrate biosynthesis; Calvin cycle. This is Fructose-1,6-bisphosphatase class 1 from Pelodictyon phaeoclathratiforme (strain DSM 5477 / BU-1).